The sequence spans 627 residues: Coiled-coil domain-containing protein 22 (627 aa).

The segment at 1-321 is sufficient for interaction with COMMD1; that stretch reads MEEADRILIH…VADIPAASQR (321 aa). The segment at 1-447 is sufficicient and required for interaction with CCDC93; the sequence is MEEADRILIH…LQDCRELESS (447 aa). A coiled-coil region spans residues 321 to 384; that stretch reads RPEQDTRAAQ…SVAEQEQALR (64 aa). Ser410 carries the phosphoserine modification. Residues 448–535 adopt a coiled-coil conformation; the sequence is RRLVEIQELH…NSLSGKLDRT (88 aa).

This sequence belongs to the CCDC22 family. As to quaternary structure, component of the commander complex consisting of the CCC subcomplex and the retriever subcomplex. Component of the CCC (COMMD/CCDC22/CCDC93) subcomplex consisting of COMMD1, COMMD2, COMMD3, COMMD4, COMMD5, COMMD6, COMMD7, COMMD8, COMMD9, COMMD10, CCDC22 and CCDC93. Forms a coiled-coil heterodimer with CCDC22; this heterodimer interacts with the guanine nucleotide exchange factor DENND10; the interaction is direct. Interacts with CUL1, CUL2, CUL3, SKP1, BTRC. Interacts with SNX17 and SNX31. Interacts with CPNE1 and CPNE4.

The protein localises to the endosome. The protein resides in the cytoplasm. Its subcellular location is the cytoskeleton. It is found in the microtubule organizing center. It localises to the centrosome. Functionally, component of the commander complex that is essential for endosomal recycling of transmembrane cargos; the Commander complex is composed of composed of the CCC subcomplex and the retriever subcomplex. Component of the CCC complex, which is involved in the regulation of endosomal recycling of surface proteins, including integrins, signaling receptor and channels. Involved in regulation of NF-kappa-B signaling. Promotes ubiquitination of I-kappa-B-kinase subunit IKBKB and its subsequent proteasomal degradation leading to NF-kappa-B activation; the function may involve association with COMMD8 and a CUL1-dependent E3 ubiquitin ligase complex. May down-regulate NF-kappa-B activity via association with COMMD1 and involving a CUL2-dependent E3 ubiquitin ligase complex. Regulates the cellular localization of COMM domain-containing proteins, such as COMMD1 and COMMD10. Component of the CCC complex, which is involved in the regulation of endosomal recycling of surface proteins, including integrins, signaling receptor and channels. The CCC complex associates with SNX17, retriever and WASH complexes to prevent lysosomal degradation and promote cell surface recycling of numerous cargos such as integrins ITGA5:ITGB1. Plays a role in copper ion homeostasis. Involved in copper-dependent ATP7A trafficking between the trans-Golgi network and vesicles in the cell periphery; the function is proposed to depend on its association within the CCC complex and cooperation with the WASH complex on early endosomes. This is Coiled-coil domain-containing protein 22 from Rattus norvegicus (Rat).